Consider the following 1184-residue polypeptide: Calcium-activated potassium channel subunit alpha-1a (1184 aa).

Topologically, residues Met-1–Met-39 are extracellular. Residues Trp-40–Leu-60 traverse the membrane as a helical segment. The Cytoplasmic portion of the chain corresponds to Trp-61 to Arg-132. 3 S-palmitoyl cysteine lipidation sites follow: Cys-71, Cys-72, and Cys-74. The helical transmembrane segment at Val-133–Ser-153 threads the bilayer. Topologically, residues Ser-154–Thr-168 are extracellular. A helical membrane pass occupies residues Leu-169–Ala-189. The Cytoplasmic segment spans residues Ala-190–Lys-193. The helical transmembrane segment at Leu-194–Val-214 threads the bilayer. The Extracellular portion of the chain corresponds to Ser-215–Leu-254. The chain crosses the membrane as a helical span at residues Val-255–Val-275. Residues Glu-276 to Gln-289 are Cytoplasmic-facing. Residues Pro-290–Gly-310 form a helical membrane-spanning segment. Topologically, residues Asp-311 to Leu-321 are extracellular. Residues Phe-322–Ile-342 form a helical membrane-spanning segment. The Cytoplasmic segment spans residues Glu-343 to Cys-1184. Residues Arg-361–Ile-503 enclose the RCK N-terminal 1 domain. Mg(2+) is bound by residues Glu-393, Gln-416, and Glu-418. Asn-468 is a Ca(2+) binding site. The tract at residues Glu-655–Cys-677 is disordered. Thr-659 carries the phosphothreonine modification. Ser-661, Ser-674, and Ser-678 each carry phosphoserine. The region spanning Ser-735–Pro-879 is the RCK N-terminal 2 domain. A Phosphothreonine modification is found at Thr-866. A phosphoserine mark is found at Ser-874 and Ser-878. Ca(2+) is bound by residues Gln-908, Asp-911, Asp-914, and Asp-916. The Calcium bowl signature appears at Gln-908 to Asp-916. The disordered stretch occupies residues Arg-1082–Ala-1143. Residues Ser-1084–Ser-1104 are compositionally biased toward low complexity. Over residues Lys-1116 to Asn-1125 the composition is skewed to basic and acidic residues.

This sequence belongs to the potassium channel family. Calcium-activated (TC 1.A.1.3) subfamily. KCa1.1/KCNMA1 sub-subfamily. As to quaternary structure, homotetramer; which constitutes the calcium-activated potassium channel. Phosphorylated. In terms of processing, palmitoylated.

The protein localises to the cell membrane. It carries out the reaction K(+)(in) = K(+)(out). In terms of biological role, potassium channel activated by both membrane depolarization or increase in cytosolic Ca(2+) that mediates export of K(+). It is also activated by the concentration of cytosolic Mg(2+). Its activation dampens the excitatory events that elevate the cytosolic Ca(2+) concentration and/or depolarize the cell membrane. It therefore contributes to repolarization of the membrane potential. Involved in determining peripheral auditory sensitivity. The chain is Calcium-activated potassium channel subunit alpha-1a from Danio rerio (Zebrafish).